We begin with the raw amino-acid sequence, 420 residues long: Cytochrome P-450 monooxygenase DoxA (420 aa).

Cys367 contributes to the heme binding site.

The protein belongs to the cytochrome P450 family. Monomer. Heme serves as cofactor.

The protein localises to the cytoplasm. It carries out the reaction 13-deoxydaunorubicin + NADPH + O2 + H(+) = 13-dihydrodaunorubicin + NADP(+) + H2O. The catalysed reaction is 13-dihydrodaunorubicin + NADPH + O2 + H(+) = daunorubicin + NADP(+) + 2 H2O. The enzyme catalyses 13-deoxycarminomycin + NADPH + O2 + H(+) = 13-dihydrocarminomycin + NADP(+) + H2O. It catalyses the reaction 13-dihydrocarminomycin + NADPH + O2 + H(+) = carminomycin + NADP(+) + 2 H2O. It carries out the reaction daunorubicin + NADPH + O2 + H(+) = doxorubicin + NADP(+) + H2O. The protein operates within antibiotic biosynthesis; daunorubicin biosynthesis. It functions in the pathway antibiotic biosynthesis; carminomycin biosynthesis. It participates in antibiotic biosynthesis; doxorubicin biosynthesis. Functionally, involved in the biosynthesis of the anthracyclines carminomycin, daunorubicin (daunomycin) and doxorubicin (adriamycin) which are aromatic polyketide antibiotics that exhibit high cytotoxicity and are widely applied in the chemotherapy of a variety of cancers. In vivo, DoxA catalyzes the C-13 hydroxylation of 13-deoxycarminomycin and 13-deoxydaunorubicin to yield 13-dihydrocarminomycin and 13-dihydrodaunorubicin, respectively, as well as the oxidation of these 13-dihydro-anthracyclines to their respective 13-keto forms, carminomycin and daunorubicin. In vivo, it also catalyzes the C-14 hydroxylation of daunorubicin to form doxorubicin. It can only use NADP. DoxA acts jointly with DnrV. The sequence is that of Cytochrome P-450 monooxygenase DoxA (doxA) from Streptomyces peucetius subsp. caesius.